The chain runs to 138 residues: MPKNKGKGGKNRRRGKNENENEKRELTYAEEGQMYAQVTKMLGNGRIEAACFDGVKRLGHIRGKLRKKVWINQGDIILLSLREFQDEKGDVILKYTADEARTLKNQGELPETAKINETDTFGAEGEDDLDFEFDVDAI.

A compositionally biased stretch (basic residues) spans 1-15; it reads MPKNKGKGGKNRRRG. Residues 1–28 are disordered; the sequence is MPKNKGKGGKNRRRGKNENENEKRELTY. A compositionally biased stretch (basic and acidic residues) spans 16–27; that stretch reads KNENENEKRELT. One can recognise an S1-like domain in the interval 22-96; the sequence is EKRELTYAEE…EKGDVILKYT (75 aa).

This sequence belongs to the eIF-1A family.

In terms of biological role, seems to be required for maximal rate of protein biosynthesis. Enhances ribosome dissociation into subunits and stabilizes the binding of the initiator Met-tRNA(I) to 40 S ribosomal subunits. The protein is Eukaryotic translation initiation factor 1A (tif11) of Schizosaccharomyces pombe (strain 972 / ATCC 24843) (Fission yeast).